The following is a 1789-amino-acid chain: Protein TIC 214 (1789 aa).

A run of 6 helical transmembrane segments spans residues Ile19–Gly39, Phe68–Leu88, Pro91–His111, Val133–Leu153, Val176–Ile196, and Ile227–Ile247.

This sequence belongs to the TIC214 family. As to quaternary structure, part of the Tic complex.

The protein localises to the plastid. It is found in the chloroplast inner membrane. In terms of biological role, involved in protein precursor import into chloroplasts. May be part of an intermediate translocation complex acting as a protein-conducting channel at the inner envelope. This is Protein TIC 214 from Capsella bursa-pastoris (Shepherd's purse).